A 23-amino-acid chain; its full sequence is Thymidine phosphorylase (23 aa).

The protein belongs to the thymidine/pyrimidine-nucleoside phosphorylase family. In terms of assembly, homodimer.

It catalyses the reaction thymidine + phosphate = 2-deoxy-alpha-D-ribose 1-phosphate + thymine. Functionally, the enzymes which catalyze the reversible phosphorolysis of pyrimidine nucleosides are involved in the degradation of these compounds and in their utilization as carbon and energy sources, or in the rescue of pyrimidine bases for nucleotide synthesis. This Lacticaseibacillus rhamnosus (Lactobacillus rhamnosus) protein is Thymidine phosphorylase (deoA).